Consider the following 409-residue polypeptide: Arginine deiminase (409 aa).

Cys-399 (amidino-cysteine intermediate) is an active-site residue.

The protein belongs to the arginine deiminase family.

Its subcellular location is the cytoplasm. It catalyses the reaction L-arginine + H2O = L-citrulline + NH4(+). Its pathway is amino-acid degradation; L-arginine degradation via ADI pathway; carbamoyl phosphate from L-arginine: step 1/2. This is Arginine deiminase (arcA) from Borreliella afzelii (Borrelia afzelii).